Here is a 152-residue protein sequence, read N- to C-terminus: Cytochrome c-type biogenesis CcmH-like mitochondrial protein (152 aa).

At 1-83 (MATEEDVKQR…ILYTPKFDLQ (83 aa)) the chain is on the mitochondrial intermembrane side. The heme site is built by C26 and C29. The chain crosses the membrane as a helical span at residues 84-104 (TAAIWLSPVIVGGVAAGVWAY). Residues 105 to 152 (KKHRQRTNVHIMALNLVRGVPLTPREKETMLDVLTPPPPANKWWWPGK) lie on the Mitochondrial matrix side of the membrane.

This sequence belongs to the CcmH/CycL/Ccl2/NrfF family.

The protein localises to the mitochondrion inner membrane. Functionally, plays a role in mitochondrial cytochrome c maturation. Probable component of a heme lyase complex involved in the reduction of apocytochrome c. The sequence is that of Cytochrome c-type biogenesis CcmH-like mitochondrial protein from Oryza sativa subsp. indica (Rice).